The chain runs to 114 residues: Superoxide dismutase [Cu-Zn] (114 aa).

Cu cation is bound by residues His37, His39, and His54. His54, His62, His71, and Asp74 together coordinate Zn(2+). The segment at His54–Ala80 is disordered. Residues Asn59–Gly73 show a composition bias toward basic and acidic residues. Cu cation is bound at residue His111.

The protein belongs to the Cu-Zn superoxide dismutase family. As to quaternary structure, homodimer. Requires Cu cation as cofactor. Zn(2+) is required as a cofactor.

It is found in the cytoplasm. It catalyses the reaction 2 superoxide + 2 H(+) = H2O2 + O2. In terms of biological role, destroys radicals which are normally produced within the cells and which are toxic to biological systems. The protein is Superoxide dismutase [Cu-Zn] of Drosophila tolteca (Fruit fly).